Consider the following 472-residue polypeptide: Phosphoglucosamine mutase (472 aa).

The active-site Phosphoserine intermediate is S123. Residues S123, D262, D264, and D266 each coordinate Mg(2+). The residue at position 123 (S123) is a Phosphoserine.

It belongs to the phosphohexose mutase family. Mg(2+) serves as cofactor. In terms of processing, activated by phosphorylation.

The enzyme catalyses alpha-D-glucosamine 1-phosphate = D-glucosamine 6-phosphate. Its function is as follows. Catalyzes the conversion of glucosamine-6-phosphate to glucosamine-1-phosphate. The polypeptide is Phosphoglucosamine mutase (Synechococcus elongatus (strain ATCC 33912 / PCC 7942 / FACHB-805) (Anacystis nidulans R2)).